Consider the following 585-residue polypeptide: MQFAEFAARAAEIEAEPADLAVVSLLSDLFSDAGDDLPTVARFVQGRVFPAWDSTTLDIGPRLCHEAIARAAGPNVSADDVEDRLADRGEIGAVAASYDFGGQRGLAAFGSGEQDGLTVAEVDSELRALAAASGSGSEETKLKTLYGLFNRTDPDEARFLARLVLSEMRIGVGEGTVRDAVAEAFLVAPADAAAIRDDDADAETEAAARERRNEAIAAVARALQVSNDYGMVAGLARDEGEAGLDGVRLEVGRPVQAMLAQAGTAADALGEWGTAAVETKFDGARVQVHRDADGEVSLFSRNMEDVTDALPEVVEFVAGAVDDPVILDGEVVAMDDGGEPLPFQEILRRFRRKHDVDRMREEVRVELRAFDCLHAAGDDLLADPLAARHDRLTALLGDDSPAVSDLLLSDDPDEIAAYEADALDAGHEGIMLKNPDAPYSPGDRGKNWLKRKPDVETLDLVVTGAEWGEGRRAEFLGTFLLSARVEAESGDDAFETIGKVATGITDEELAELTDLLEPEIEREAGKEVDIRPSVVFEVGYEEIQTSPTYSSGYALRFPRFVTVREDKTAETADSLDRVERLADSQ.

Glu-278 is a binding site for ATP. Residue Lys-280 is the N6-AMP-lysine intermediate of the active site. The ATP site is built by Arg-285, Arg-301, Glu-330, Phe-370, Arg-444, and Lys-450.

It belongs to the ATP-dependent DNA ligase family. Mg(2+) is required as a cofactor.

It carries out the reaction ATP + (deoxyribonucleotide)n-3'-hydroxyl + 5'-phospho-(deoxyribonucleotide)m = (deoxyribonucleotide)n+m + AMP + diphosphate.. Functionally, DNA ligase that seals nicks in double-stranded DNA during DNA replication, DNA recombination and DNA repair. The polypeptide is DNA ligase (Haloferax volcanii (strain ATCC 29605 / DSM 3757 / JCM 8879 / NBRC 14742 / NCIMB 2012 / VKM B-1768 / DS2) (Halobacterium volcanii)).